A 509-amino-acid chain; its full sequence is Maturase K (509 aa).

This sequence belongs to the intron maturase 2 family. MatK subfamily.

Its subcellular location is the plastid. It localises to the chloroplast. Its function is as follows. Usually encoded in the trnK tRNA gene intron. Probably assists in splicing its own and other chloroplast group II introns. The sequence is that of Maturase K from Galbulimima belgraveana (Northern pigeonberry ash).